We begin with the raw amino-acid sequence, 314 residues long: tRNA uridine(34) hydroxylase (314 aa).

A Rhodanese domain is found at 135–229 (ADPETLVIDT…YLEQIPAEES (95 aa)). The active-site Cysteine persulfide intermediate is the Cys-189.

It belongs to the TrhO family.

The catalysed reaction is uridine(34) in tRNA + AH2 + O2 = 5-hydroxyuridine(34) in tRNA + A + H2O. Its function is as follows. Catalyzes oxygen-dependent 5-hydroxyuridine (ho5U) modification at position 34 in tRNAs. The chain is tRNA uridine(34) hydroxylase from Sinorhizobium fredii (strain NBRC 101917 / NGR234).